The primary structure comprises 383 residues: MTTIFYTEPELVLSHGRKVLFINPNDLQIFKDIEVPADLTTCGFKIEATDEGEPKATCGSNLEVSILNVCYSPDRQLIALTTVGQKALLLYKSRPEHALLLSVRALARASSALAFAPDSSSVLVTDKTGDCYQYDCVEVEAPPKLLLGHLSIVYDIVWTPDLKHIITCDRDDKIRVTNYPATHDIHSYCLGHKEFVSGLALLPGNEGLLISISGDKTLRLWNYLTGKEVLQQQLPAPAVRLQMRELIQSKRYLLAVLFYDHVEAIGLYELELKEAAWSIAKESLVRAEAGSWSISNFALTSDRIYVAGAVNERLTLRVYNSADGKQAESVPAGWLDMVMENFAEQTCVPEDLSAWFKKRYDNISEYMERKKRRIEDQQQQHQK.

WD repeat units lie at residues 61-101 (NLEV…ALLL), 105-144 (ALAR…APPK), 148-187 (GHLS…DIHS), 191-231 (GHKE…EVLQ), and 289-329 (AGSW…QAES).

Belongs to the WD repeat TRM82 family. Forms a heterodimer with the catalytic subunit Mettl1. Interacts with mei-P26 and weakly interacts with bgcn; required for the function or formation of the mei-P26-bgcn-bam-sxl complex. Interacts with nanos; may be involved in mei-P26-dependent derepression of the BMP signaling pathway. Interacts with Myc; the interaction may be mediated by mei-P26 and may be involved in the regulation of ribosome biogenesis. In testis, it is present at high level in hub cells, a niche for germline stem cells of testis. Ubiquitously expressed in all testicular cells throughout spermatogenesis. Ubiquitously expressed in all germline and somatic cells of the ovary.

It localises to the nucleus. It is found in the cytoplasm. Its pathway is tRNA modification; N(7)-methylguanine-tRNA biosynthesis. Functionally, required for the Mettl1-dependent formation of N(7)-methylguanine at position 46 (m7G46) in tRNA. In the Mettl1-wuho methyltransferase complex, it is required to stabilize and induce conformational changes of the catalytic subunit. Required for binding of nanos mRNA and repression of translation by the mei-P26-bgcn-bam-sxl complex. May cooperate with mei-P26 and nanos to derepress the BMP signaling pathway. May cooperate with mei-P26 to suppress expression of a subset of microRNAs. May cooperate with mei-P26 to regulate bam expression levels in germline cells during gametogenesis. Required to promote mitosis to meiosis transition during gametogenesis. May regulate germline cell division in part by regulating ribosome biogenesis. This is tRNA (guanine-N(7)-)-methyltransferase non-catalytic subunit wuho from Drosophila mojavensis (Fruit fly).